Here is a 274-residue protein sequence, read N- to C-terminus: ATP synthase subunit delta (274 aa).

The protein belongs to the ATPase delta chain family. In terms of assembly, F-type ATPases have 2 components, F(1) - the catalytic core - and F(0) - the membrane proton channel. F(1) has five subunits: alpha(3), beta(3), gamma(1), delta(1), epsilon(1). F(0) has three main subunits: a(1), b(2) and c(10-14). The alpha and beta chains form an alternating ring which encloses part of the gamma chain. F(1) is attached to F(0) by a central stalk formed by the gamma and epsilon chains, while a peripheral stalk is formed by the delta and b chains.

It is found in the cell membrane. F(1)F(0) ATP synthase produces ATP from ADP in the presence of a proton or sodium gradient. F-type ATPases consist of two structural domains, F(1) containing the extramembraneous catalytic core and F(0) containing the membrane proton channel, linked together by a central stalk and a peripheral stalk. During catalysis, ATP synthesis in the catalytic domain of F(1) is coupled via a rotary mechanism of the central stalk subunits to proton translocation. In terms of biological role, this protein is part of the stalk that links CF(0) to CF(1). It either transmits conformational changes from CF(0) to CF(1) or is implicated in proton conduction. The polypeptide is ATP synthase subunit delta (Corynebacterium efficiens (strain DSM 44549 / YS-314 / AJ 12310 / JCM 11189 / NBRC 100395)).